The chain runs to 212 residues: MGGTFDPIHYGHLVAASEVADLFGLDQVVFVPSGQPWQKDRHVSAAEDRYLMTVIATASNPRFSVSRVDIDRAGPTYTRDTLRDLHALNPDSELFFITGADALASILSWQGWETLFELAHFVGVSRPGYELRREHITGVLGELPDDALTLVEIPALAISSTDCRQRAAHRRPLWYLMPDGVVQYVSKRRLYRAEPGPAVAVTETSLSTGDHP.

The protein belongs to the NadD family.

It catalyses the reaction nicotinate beta-D-ribonucleotide + ATP + H(+) = deamido-NAD(+) + diphosphate. It participates in cofactor biosynthesis; NAD(+) biosynthesis; deamido-NAD(+) from nicotinate D-ribonucleotide: step 1/1. In terms of biological role, catalyzes the reversible adenylation of nicotinate mononucleotide (NaMN) to nicotinic acid adenine dinucleotide (NaAD). The chain is Probable nicotinate-nucleotide adenylyltransferase from Mycobacterium avium (strain 104).